The sequence spans 165 residues: Protein SprT (165 aa).

The SprT-like domain maps to 20–163; the sequence is EKLAQANLKL…RCVHCGEQLV (144 aa). Histidine 78 lines the Zn(2+) pocket. Glutamate 79 is a catalytic residue. Residue histidine 82 participates in Zn(2+) binding.

It belongs to the SprT family. Zn(2+) serves as cofactor.

The protein resides in the cytoplasm. The protein is Protein SprT of Shigella boydii serotype 18 (strain CDC 3083-94 / BS512).